A 540-amino-acid chain; its full sequence is 2,3-bisphosphoglycerate-independent phosphoglycerate mutase (540 aa).

Residues aspartate 24 and serine 74 each coordinate Mn(2+). Serine 74 functions as the Phosphoserine intermediate in the catalytic mechanism. Residues histidine 135, 165–166 (RD), arginine 197, arginine 203, 268–271 (RPDR), and lysine 341 each bind substrate. 5 residues coordinate Mn(2+): aspartate 408, histidine 412, aspartate 449, histidine 450, and histidine 467.

This sequence belongs to the BPG-independent phosphoglycerate mutase family. In terms of assembly, monomer. Mn(2+) serves as cofactor.

It carries out the reaction (2R)-2-phosphoglycerate = (2R)-3-phosphoglycerate. It participates in carbohydrate degradation; glycolysis; pyruvate from D-glyceraldehyde 3-phosphate: step 3/5. Its function is as follows. Catalyzes the interconversion of 2-phosphoglycerate and 3-phosphoglycerate. The polypeptide is 2,3-bisphosphoglycerate-independent phosphoglycerate mutase (Prochlorococcus marinus (strain MIT 9303)).